The primary structure comprises 276 residues: MKLGCHISISKGFPQAVENAHRLGCEAFQFFTKNPRGFKGKSADPEAAARGRALMAEYGLVAVAHAPYITNLSTPDPELQAISIASLKQDLENAEAYGAIGCVCHMGKHVGEGEAYGRARMVETLNRLLEAYTGSCPLLLENTAGMGSELGTHLEELMEVRSRVEQPERIAFCFDTCHAFAAGIYRPEDWEDFVAHARAIGYWGLLRAVHLNDSKFDHGSRKDRHANLGKGFLGEAGIATLLRSGAFEGLPVVLETPVKDEAEYGPEIAYARSLLQ.

Residues H65, H105, E141, D175, H178, H210, D223, H225, and E255 each coordinate Zn(2+).

Belongs to the AP endonuclease 2 family. Requires Zn(2+) as cofactor.

The enzyme catalyses Endonucleolytic cleavage to 5'-phosphooligonucleotide end-products.. In terms of biological role, endonuclease IV plays a role in DNA repair. It cleaves phosphodiester bonds at apurinic or apyrimidinic (AP) sites, generating a 3'-hydroxyl group and a 5'-terminal sugar phosphate. This chain is Probable endonuclease 4, found in Symbiobacterium thermophilum (strain DSM 24528 / JCM 14929 / IAM 14863 / T).